Consider the following 187-residue polypeptide: Acireductone dioxygenase (187 aa).

Fe(2+)-binding residues include His87, His89, Glu93, and His136. 4 residues coordinate Ni(2+): His87, His89, Glu93, and His136.

This sequence belongs to the acireductone dioxygenase (ARD) family. Requires Fe(2+) as cofactor. Ni(2+) serves as cofactor.

Its subcellular location is the cytoplasm. The protein resides in the nucleus. It catalyses the reaction 1,2-dihydroxy-5-(methylsulfanyl)pent-1-en-3-one + O2 = 4-methylsulfanyl-2-oxobutanoate + formate + 2 H(+). It carries out the reaction 1,2-dihydroxy-5-(methylsulfanyl)pent-1-en-3-one + O2 = 3-(methylsulfanyl)propanoate + CO + formate + 2 H(+). It functions in the pathway amino-acid biosynthesis; L-methionine biosynthesis via salvage pathway; L-methionine from S-methyl-5-thio-alpha-D-ribose 1-phosphate: step 5/6. Catalyzes 2 different reactions between oxygen and the acireductone 1,2-dihydroxy-3-keto-5-methylthiopentene (DHK-MTPene) depending upon the metal bound in the active site. Fe-containing acireductone dioxygenase (Fe-ARD) produces formate and 2-keto-4-methylthiobutyrate (KMTB), the alpha-ketoacid precursor of methionine in the methionine recycle pathway. Ni-containing acireductone dioxygenase (Ni-ARD) produces methylthiopropionate, carbon monoxide and formate, and does not lie on the methionine recycle pathway. The protein is Acireductone dioxygenase of Cryptococcus neoformans var. neoformans serotype D (strain JEC21 / ATCC MYA-565) (Filobasidiella neoformans).